A 205-amino-acid chain; its full sequence is MDIMKDKIRQALSELDILATEVQIDQWLDYLKLLEKWNKVYNMTAIKNIDEMLVKHLFDSLAVAKYIKGDSTVDVGTGGGLPGVVLAILYPQHQFTLVDSVGKKIMFLKNVKKSLSLNNINPLNTRIENLEGNFDNIISRAFSSVDTFYELCKHFLTEHNQMLAMKGRDLEERNLESLHLNIEKYSIKVPFLNAERNLIVIRKKL.

Residues Gly76, Leu81, 127–128 (IE), and Arg140 contribute to the S-adenosyl-L-methionine site.

This sequence belongs to the methyltransferase superfamily. RNA methyltransferase RsmG family.

It is found in the cytoplasm. It catalyses the reaction guanosine(527) in 16S rRNA + S-adenosyl-L-methionine = N(7)-methylguanosine(527) in 16S rRNA + S-adenosyl-L-homocysteine. In terms of biological role, specifically methylates the N7 position of guanine in position 527 of 16S rRNA. This is Ribosomal RNA small subunit methyltransferase G from Francisella tularensis subsp. tularensis (strain WY96-3418).